The sequence spans 121 residues: uncharacterized protein (121 aa).

In terms of domain architecture, Cupin type-2 spans S47–S101.

This is an uncharacterized protein from Aquifex aeolicus (strain VF5).